The chain runs to 208 residues: 2-dehydro-3-deoxy-phosphogluconate aldolase (208 aa).

Catalysis depends on Glu41, which acts as the Proton acceptor. 3 residues coordinate pyruvate: Arg45, Thr68, and Lys128. Catalysis depends on Lys128, which acts as the Schiff-base intermediate with substrate.

It belongs to the KHG/KDPG aldolase family. As to quaternary structure, homotrimer.

The protein localises to the cytoplasm. The catalysed reaction is 2-dehydro-3-deoxy-6-phospho-D-gluconate = D-glyceraldehyde 3-phosphate + pyruvate. It functions in the pathway carbohydrate acid metabolism; 2-dehydro-3-deoxy-D-gluconate degradation; D-glyceraldehyde 3-phosphate and pyruvate from 2-dehydro-3-deoxy-D-gluconate: step 2/2. Its function is as follows. Involved in the degradation of glucose via the Entner-Doudoroff pathway. Catalyzes the reversible, stereospecific retro-aldol cleavage of 2-keto-3-deoxy-6-phosphogluconate (KDPG) to pyruvate and D-glyceraldehyde-3-phosphate. The sequence is that of 2-dehydro-3-deoxy-phosphogluconate aldolase from Zymomonas mobilis subsp. mobilis (strain ATCC 31821 / ZM4 / CP4).